The chain runs to 658 residues: Glycogen debranching enzyme (658 aa).

The Nucleophile role is filled by Asp-336. Glu-371 acts as the Proton donor in catalysis. Positions 459 to 484 (EANGEENRDGTNSNYSDNHGKEGLGG) are disordered.

It belongs to the glycosyl hydrolase 13 family.

The enzyme catalyses Hydrolysis of (1-&gt;6)-alpha-D-glucosidic linkages to branches with degrees of polymerization of three or four glucose residues in limit dextrin.. Its pathway is glycan degradation; glycogen degradation. Removes maltotriose and maltotetraose chains that are attached by 1,6-alpha-linkage to the limit dextrin main chain, generating a debranched limit dextrin. The polypeptide is Glycogen debranching enzyme (Salmonella paratyphi B (strain ATCC BAA-1250 / SPB7)).